Reading from the N-terminus, the 220-residue chain is Putative threonylcarbamoyl-AMP synthase (220 aa).

The 186-residue stretch at 17-202 folds into the YrdC-like domain; it reads ARGIASAVAA…TPRILRAGPV (186 aa).

Belongs to the SUA5 family.

Its subcellular location is the cytoplasm. It catalyses the reaction L-threonine + hydrogencarbonate + ATP = L-threonylcarbamoyladenylate + diphosphate + H2O. Required for the formation of a threonylcarbamoyl group on adenosine at position 37 (t(6)A37) in tRNAs that read codons beginning with adenine. Catalyzes the conversion of L-threonine, HCO(3)(-)/CO(2) and ATP to give threonylcarbamoyl-AMP (TC-AMP) as the acyladenylate intermediate, with the release of diphosphate. The chain is Putative threonylcarbamoyl-AMP synthase from Mycobacterium leprae (strain TN).